A 482-amino-acid polypeptide reads, in one-letter code: tRNA sulfurtransferase (482 aa).

One can recognise a THUMP domain in the interval 61 to 165 (VQICDALTRI…QDVLILVKAR (105 aa)). ATP contacts are provided by residues 183 to 184 (LI), lysine 265, glycine 287, and glutamine 296. Cysteine 344 and cysteine 456 are disulfide-bonded. One can recognise a Rhodanese domain in the interval 404 to 482 (FAPTDVLLDI…GFDNVKVYRP (79 aa)). Catalysis depends on cysteine 456, which acts as the Cysteine persulfide intermediate.

The protein belongs to the ThiI family.

It localises to the cytoplasm. It catalyses the reaction [ThiI sulfur-carrier protein]-S-sulfanyl-L-cysteine + a uridine in tRNA + 2 reduced [2Fe-2S]-[ferredoxin] + ATP + H(+) = [ThiI sulfur-carrier protein]-L-cysteine + a 4-thiouridine in tRNA + 2 oxidized [2Fe-2S]-[ferredoxin] + AMP + diphosphate. The enzyme catalyses [ThiS sulfur-carrier protein]-C-terminal Gly-Gly-AMP + S-sulfanyl-L-cysteinyl-[cysteine desulfurase] + AH2 = [ThiS sulfur-carrier protein]-C-terminal-Gly-aminoethanethioate + L-cysteinyl-[cysteine desulfurase] + A + AMP + 2 H(+). It participates in cofactor biosynthesis; thiamine diphosphate biosynthesis. Its function is as follows. Catalyzes the ATP-dependent transfer of a sulfur to tRNA to produce 4-thiouridine in position 8 of tRNAs, which functions as a near-UV photosensor. Also catalyzes the transfer of sulfur to the sulfur carrier protein ThiS, forming ThiS-thiocarboxylate. This is a step in the synthesis of thiazole, in the thiamine biosynthesis pathway. The sulfur is donated as persulfide by IscS. This chain is tRNA sulfurtransferase, found in Photorhabdus laumondii subsp. laumondii (strain DSM 15139 / CIP 105565 / TT01) (Photorhabdus luminescens subsp. laumondii).